Reading from the N-terminus, the 467-residue chain is Asparagine--tRNA ligase (467 aa).

Belongs to the class-II aminoacyl-tRNA synthetase family. As to quaternary structure, homodimer.

It is found in the cytoplasm. It carries out the reaction tRNA(Asn) + L-asparagine + ATP = L-asparaginyl-tRNA(Asn) + AMP + diphosphate + H(+). The chain is Asparagine--tRNA ligase from Glaesserella parasuis serovar 5 (strain SH0165) (Haemophilus parasuis).